Here is a 2604-residue protein sequence, read N- to C-terminus: BEACH domain-containing protein B (2604 aa).

Positions 1761 to 1912 constitute a BEACH-type PH domain; the sequence is VGTSEVLTSV…NAKEVGMLIV (152 aa). In terms of domain architecture, BEACH spans 1936 to 2226; sequence DRRIAMEMAE…QIFRKKHPRR (291 aa). WD repeat units lie at residues 2254–2293, 2368–2407, 2433–2474, 2476–2515, 2516–2557, and 2558–2596; these read HSPSAVLYVGVVDSNIVLVNQGLTLSVKIWLTTQLHSGGN, HHKDVVSCVAVTADSTILATGSYDTTVMVWDILRMRTPEK, GHDD…RSLK, PSGSAVSKLAASHHGRIVLYGDDDLSLHLYSINGKHLASS, ESNG…KRYN, and GAGKIITSLTVTQEECFLAGTKDGALLVYSIENPQHRKP.

Functionally, may be involved in the suppression of BCHC1 activity. The polypeptide is BEACH domain-containing protein B (Arabidopsis thaliana (Mouse-ear cress)).